Consider the following 349-residue polypeptide: tRNA pseudouridine synthase D (349 aa).

A disordered region spans residues 1 to 22 (MTDAPLVTAELPGSGGSLRRSP). The active-site Nucleophile is the Asp78. Residues 150 to 304 (GLPNLFGPQR…AEGTRRAARL (155 aa)) form the TRUD domain.

It belongs to the pseudouridine synthase TruD family.

It carries out the reaction uridine(13) in tRNA = pseudouridine(13) in tRNA. Responsible for synthesis of pseudouridine from uracil-13 in transfer RNAs. The sequence is that of tRNA pseudouridine synthase D from Anaeromyxobacter sp. (strain Fw109-5).